Reading from the N-terminus, the 383-residue chain is 3-phytase (383 aa).

Positions 1 to 26 (MNHSKTLLLTAAAGLMLTCGAVSSQA) are cleaved as a signal peptide. Residues 27-30 (KHKL) constitute a propeptide that is removed on maturation. Residues 31 to 362 (SDPYHFTVNA…VPWERIADKI (332 aa)) enclose the BPP domain. Residues 364–383 (FHPQVNKQVDPRKMTDRSGK) form a disordered region. Residues 372–383 (VDPRKMTDRSGK) are compositionally biased toward basic and acidic residues.

Its subcellular location is the secreted. It carries out the reaction 1D-myo-inositol hexakisphosphate + H2O = 1D-myo-inositol 1,2,4,5,6-pentakisphosphate + phosphate. This is 3-phytase (phy) from Bacillus sp. (strain DS11).